A 350-amino-acid polypeptide reads, in one-letter code: Biotin synthase (350 aa).

In terms of domain architecture, Radical SAM core spans 38–262 (RQVQVSTLLS…MMPTSYVRLS (225 aa)). The [4Fe-4S] cluster site is built by Cys-53, Cys-57, and Cys-60. Residues Cys-97, Cys-128, Cys-188, and Arg-260 each coordinate [2Fe-2S] cluster.

It belongs to the radical SAM superfamily. Biotin synthase family. In terms of assembly, homodimer. Requires [4Fe-4S] cluster as cofactor. [2Fe-2S] cluster is required as a cofactor.

It catalyses the reaction (4R,5S)-dethiobiotin + (sulfur carrier)-SH + 2 reduced [2Fe-2S]-[ferredoxin] + 2 S-adenosyl-L-methionine = (sulfur carrier)-H + biotin + 2 5'-deoxyadenosine + 2 L-methionine + 2 oxidized [2Fe-2S]-[ferredoxin]. The protein operates within cofactor biosynthesis; biotin biosynthesis; biotin from 7,8-diaminononanoate: step 2/2. Catalyzes the conversion of dethiobiotin (DTB) to biotin by the insertion of a sulfur atom into dethiobiotin via a radical-based mechanism. In Yersinia enterocolitica serotype O:8 / biotype 1B (strain NCTC 13174 / 8081), this protein is Biotin synthase.